The chain runs to 585 residues: Auxin response factor 17 (585 aa).

Positions 119–221 form a DNA-binding region, TF-B3; sequence FAKILTPSDA…EMFIGVRRTP (103 aa). 2 disordered regions span residues 483–517 and 535–585; these read EMMN…RGPL and EHSE…SSQG. The segment covering 488 to 510 has biased composition (low complexity); sequence GSPPSDNLSPNSNTTNLSSGNDL. The span at 573-585 shows a compositional bias: polar residues; that stretch reads KHSNSNAGSSSQG.

It belongs to the ARF family. Homo and heterodimers.

It localises to the nucleus. Its function is as follows. Auxin response factors (ARFs) are transcriptional factors that bind specifically to the DNA sequence 5'-TGTCTC-3' found in the auxin-responsive promoter elements (AuxREs). Could act as transcriptional activator or repressor. Formation of heterodimers with Aux/IAA proteins may alter their ability to modulate early auxin response genes expression. This chain is Auxin response factor 17 (ARF17), found in Arabidopsis thaliana (Mouse-ear cress).